Here is a 598-residue protein sequence, read N- to C-terminus: Elongation factor 4 (598 aa).

Residues 2–184 (DNVRNFAIIA…AIITKLPAPQ (183 aa)) form the tr-type G domain. GTP contacts are provided by residues 14-19 (DHGKST) and 131-134 (NKVD).

This sequence belongs to the TRAFAC class translation factor GTPase superfamily. Classic translation factor GTPase family. LepA subfamily.

It is found in the cell membrane. The catalysed reaction is GTP + H2O = GDP + phosphate + H(+). Required for accurate and efficient protein synthesis under certain stress conditions. May act as a fidelity factor of the translation reaction, by catalyzing a one-codon backward translocation of tRNAs on improperly translocated ribosomes. Back-translocation proceeds from a post-translocation (POST) complex to a pre-translocation (PRE) complex, thus giving elongation factor G a second chance to translocate the tRNAs correctly. Binds to ribosomes in a GTP-dependent manner. This is Elongation factor 4 from Wolbachia sp. subsp. Brugia malayi (strain TRS).